The sequence spans 188 residues: Ribosome-recycling factor (188 aa).

The protein belongs to the RRF family.

It localises to the cytoplasm. In terms of biological role, responsible for the release of ribosomes from messenger RNA at the termination of protein biosynthesis. May increase the efficiency of translation by recycling ribosomes from one round of translation to another. The protein is Ribosome-recycling factor of Lawsonia intracellularis (strain PHE/MN1-00).